Here is an 812-residue protein sequence, read N- to C-terminus: Phosphoenolpyruvate synthase (812 aa).

H430 serves as the catalytic Tele-phosphohistidine intermediate. The substrate site is built by R520, R588, E690, G711, S712, N713, and D714. Residue E690 participates in Mg(2+) binding. D714 contacts Mg(2+). C761 (proton donor) is an active-site residue.

This sequence belongs to the PEP-utilizing enzyme family. It depends on Mg(2+) as a cofactor.

It carries out the reaction pyruvate + ATP + H2O = phosphoenolpyruvate + AMP + phosphate + 2 H(+). It participates in carbohydrate biosynthesis; gluconeogenesis. Its function is as follows. Catalyzes the phosphorylation of pyruvate to phosphoenolpyruvate. This is Phosphoenolpyruvate synthase (ppsA) from Helicobacter pylori (strain ATCC 700392 / 26695) (Campylobacter pylori).